The primary structure comprises 579 residues: Pentatricopeptide repeat-containing protein At2g15690, mitochondrial (579 aa).

Residues 1-49 (MSSLMAIRCARTQNIVTIGSLLQLRSSFPRLSSQFHFSGTLNSIPIKHL) constitute a mitochondrion transit peptide. Composition is skewed to polar residues over residues 56–71 (NDYHQNPQSGSPSQHQ) and 78–103 (SFDSQNQTNTNQRVPQSPNQWSTQHG). Residues 56–208 (NDYHQNPQSG…QMNEVAPPPS (153 aa)) form a disordered region. 2 stretches are compositionally biased toward low complexity: residues 117–136 (GGQRPPYGGQNPQQGGQMSQ) and 148–199 (RPQY…SPNQ). PPR repeat units follow at residues 235 to 269 (DRECFVLLFESCANLKSLEHSKKVHDHFLQSKFRG), 270 to 300 (DPKLNNMVISMFGECSSITDAKRVFDHMVDK), 301 to 335 (DMDSWHLMMCAYSDNGMGDDALHLFEEMTKHGLKP), 336 to 371 (NEETFLTVFLACATVGGIEEAFLHFDSMKNEHGISP), and 372 to 402 (KTEHYLGVLGVLGKCGHLVEAEQYIRDLPFE). The type DYW motif stretch occupies residues 485-579 (GVVYVPDTRF…DGKCSCGDYW (95 aa)).

The protein belongs to the PPR family. PCMP-H subfamily.

The protein resides in the mitochondrion. This is Pentatricopeptide repeat-containing protein At2g15690, mitochondrial (PCMP-H66) from Arabidopsis thaliana (Mouse-ear cress).